The primary structure comprises 293 residues: MLIEFTKMHGLGNDFMVIDLVTQRLELTPELITLLADRNLGIGFDQLLVVEPPMRPDVDFRYRIFNSDGSEVEQCGNGARCFARFVQARKLSFKQRIRVETKSGILTLSTDNYGWVEVDMGKPRFEPAEIPFTPKAITKIQNAYHLDVEGTPVQLYVANMGNPHAVIKVDDILTADVEKLGKAIESHPAFPERVNVGFMQVMNQRHIRLRVYERGVGETQACGTGACAAVATGIREGWLDEGEEIRAQLYGGSLLIRWSPGYSVMMTGPTAFVYEGVFSPDGIMAQAGLKPLS.

The substrate site is built by Asn-13, Gln-46, and Asn-66. The active-site Proton donor is Cys-75. Substrate contacts are provided by residues 76 to 77 (GN), Asn-162, Asn-195, and 213 to 214 (ER). The active-site Proton acceptor is the Cys-222. 223-224 (GT) contacts substrate.

It belongs to the diaminopimelate epimerase family. In terms of assembly, homodimer.

The protein resides in the cytoplasm. The enzyme catalyses (2S,6S)-2,6-diaminopimelate = meso-2,6-diaminopimelate. It functions in the pathway amino-acid biosynthesis; L-lysine biosynthesis via DAP pathway; DL-2,6-diaminopimelate from LL-2,6-diaminopimelate: step 1/1. Functionally, catalyzes the stereoinversion of LL-2,6-diaminopimelate (L,L-DAP) to meso-diaminopimelate (meso-DAP), a precursor of L-lysine and an essential component of the bacterial peptidoglycan. The sequence is that of Diaminopimelate epimerase from Psychrobacter sp. (strain PRwf-1).